The chain runs to 120 residues: NAD(P)H-quinone oxidoreductase subunit 3, chloroplastic (120 aa).

The next 3 helical transmembrane spans lie at 10 to 30 (LWFF…ISEI), 64 to 84 (MFAL…PWAI), and 89 to 109 (LGIS…VGLV).

This sequence belongs to the complex I subunit 3 family. In terms of assembly, NDH is composed of at least 16 different subunits, 5 of which are encoded in the nucleus.

It localises to the plastid. It is found in the chloroplast thylakoid membrane. The catalysed reaction is a plastoquinone + NADH + (n+1) H(+)(in) = a plastoquinol + NAD(+) + n H(+)(out). The enzyme catalyses a plastoquinone + NADPH + (n+1) H(+)(in) = a plastoquinol + NADP(+) + n H(+)(out). Its function is as follows. NDH shuttles electrons from NAD(P)H:plastoquinone, via FMN and iron-sulfur (Fe-S) centers, to quinones in the photosynthetic chain and possibly in a chloroplast respiratory chain. The immediate electron acceptor for the enzyme in this species is believed to be plastoquinone. Couples the redox reaction to proton translocation, and thus conserves the redox energy in a proton gradient. The chain is NAD(P)H-quinone oxidoreductase subunit 3, chloroplastic from Chara vulgaris (Common stonewort).